The following is a 332-amino-acid chain: uncharacterized protein (332 aa).

The chain crosses the membrane as a helical span at residues 27 to 47 (CAIVFLCVLLILPFLSCCTSL).

The protein resides in the membrane. This is an uncharacterized protein from Treponema pallidum (strain Nichols).